We begin with the raw amino-acid sequence, 934 residues long: Protein unc-45 homolog B (934 aa).

TPR repeat units follow at residues 9 to 42, 48 to 81, and 83 to 115; these read SVQLKEEGNKHFQAGEIDQAIDCYTKAIKTCKKE, AVIYRNRSACFLKKENYSNAASDATKAIDVDAAD, and KALYRRCQAFEKLGKLDMAFKDVQRCATIEPKN. 3 ARM repeats span residues 174–213, 216–255, and 753–792; these read DAGAERIFQNNGVPLLMQLIDTGKPEMILAAIRTLSGMCT, RARATAIIHSVGISKLCSIMAVDNEEIALATANLFQCVND, and DKLRVKILKEKALPEIENYMFEDHEQIRQAATECMCNLVC.

In terms of assembly, interacts with apobec2a, apobec2b, hsp90a.1, hsp90a.2, hsp90ab1 and myosin. As to expression, expressed in striated muscle tissue including somites, heart and craniofacial muscle. Detected in mesoderm adjacent to the dorsal midline during the late gastrula stages and in somitic mesoderm during development of trunk skeletal muscle. Also expressed in cranial skeletal muscle and in cardiac and smooth muscle. Detected in somitic muscle and heart primordium of 24 hour embryos. At later stages, expressed in muscles of pectoral fins, jaw, branchial arches and eye.

The protein localises to the cytoplasm. Its subcellular location is the myofibril. It localises to the sarcomere. It is found in the z line. The protein resides in the a band. The protein localises to the perinuclear region. Functionally, acts as a co-chaperone for HSP90 and is required for proper folding of the myosin motor domain. Plays a role in sarcomere formation during muscle cell development. Required for myoseptal integrity, myofiber attachment, motility and craniofacial development. Is necessary for normal early lens development. In Danio rerio (Zebrafish), this protein is Protein unc-45 homolog B.